A 555-amino-acid chain; its full sequence is MTHLSDLDIANQSTLQPIKDIAASVGISEDALEPYGHYKAKIDINKITPRENKGKVVLVTAMSPTPAGEGKSTVTVGLADAFHELNKNVMVALREPALGPTFGIKGGATGGGYAQVLPMEDINLHFNGDFHAITTANNALSAFIDNHIHQGNELGIDQRRIEWKRVLDMNDRALRHVNVGLGGPTNGVPREDGFNITVASEIMAILCLSRSIKDLKDKISRITIGYTRDRKPVTVADLKVEGALAMILKDAIKPNLVQSIEGTPTLVHGGPFANIAHGCNSILATETARDLADIVVTEAGFGSDLGAEKFMDIKVREAGFDPAAVVVVATIRALKMHGGVAKDNLKEENVEAVKAGIVNLERHVNNIKKFGVEPVVAINAFIHDTDAEVEYVKSWAKENNVRIALTEVWKKGGKGGVDLANEVLEVIDQPNSFKPLYELELPLEQKIEKIVTEIYGGSKVTFSSKAQKQLKQFKENGWDNYPVCMAKTQYSFSDDQTLLGAPSGFEITIRELEAKTGAGFIVALTGAIMTMPGLPKKPAALNMDVTDDGHAIGLF.

65 to 72 (TPAGEGKS) contacts ATP.

It belongs to the formate--tetrahydrofolate ligase family.

The enzyme catalyses (6S)-5,6,7,8-tetrahydrofolate + formate + ATP = (6R)-10-formyltetrahydrofolate + ADP + phosphate. Its pathway is one-carbon metabolism; tetrahydrofolate interconversion. This Staphylococcus aureus (strain COL) protein is Formate--tetrahydrofolate ligase.